A 338-amino-acid polypeptide reads, in one-letter code: Glycerol-3-phosphate dehydrogenase [NAD(P)+] (338 aa).

NADPH contacts are provided by S14, Y15, H35, and K109. 3 residues coordinate sn-glycerol 3-phosphate: K109, G138, and T140. NADPH is bound at residue A142. Sn-glycerol 3-phosphate-binding residues include K194, D247, S257, R258, and N259. Residue K194 is the Proton acceptor of the active site. Residue R258 coordinates NADPH. V282 and E284 together coordinate NADPH.

Belongs to the NAD-dependent glycerol-3-phosphate dehydrogenase family.

It is found in the cytoplasm. The catalysed reaction is sn-glycerol 3-phosphate + NAD(+) = dihydroxyacetone phosphate + NADH + H(+). The enzyme catalyses sn-glycerol 3-phosphate + NADP(+) = dihydroxyacetone phosphate + NADPH + H(+). The protein operates within membrane lipid metabolism; glycerophospholipid metabolism. In terms of biological role, catalyzes the reduction of the glycolytic intermediate dihydroxyacetone phosphate (DHAP) to sn-glycerol 3-phosphate (G3P), the key precursor for phospholipid synthesis. The polypeptide is Glycerol-3-phosphate dehydrogenase [NAD(P)+] (Shewanella sp. (strain MR-4)).